A 226-amino-acid chain; its full sequence is Protein-L-isoaspartate O-methyltransferase (226 aa).

The active site involves serine 66.

Belongs to the methyltransferase superfamily. L-isoaspartyl/D-aspartyl protein methyltransferase family.

It is found in the cytoplasm. The catalysed reaction is [protein]-L-isoaspartate + S-adenosyl-L-methionine = [protein]-L-isoaspartate alpha-methyl ester + S-adenosyl-L-homocysteine. In terms of biological role, catalyzes the methyl esterification of L-isoaspartyl residues in peptides and proteins that result from spontaneous decomposition of normal L-aspartyl and L-asparaginyl residues. It plays a role in the repair and/or degradation of damaged proteins. This is Protein-L-isoaspartate O-methyltransferase from Methanopyrus kandleri (strain AV19 / DSM 6324 / JCM 9639 / NBRC 100938).